Consider the following 236-residue polypeptide: Small ribosomal subunit protein eS6 (236 aa).

A phosphoserine mark is found at S232 and S233.

This sequence belongs to the eukaryotic ribosomal protein eS6 family. Post-translationally, phosphorylated.

The protein is Small ribosomal subunit protein eS6 (RPS6) of Debaryomyces hansenii (strain ATCC 36239 / CBS 767 / BCRC 21394 / JCM 1990 / NBRC 0083 / IGC 2968) (Yeast).